Consider the following 38-residue polypeptide: Photosystem II reaction center protein L (38 aa).

A helical membrane pass occupies residues 17–37 (SLFWGLLLIFVLAVLFSSYFF).

The protein belongs to the PsbL family. PSII is composed of 1 copy each of membrane proteins PsbA, PsbB, PsbC, PsbD, PsbE, PsbF, PsbH, PsbI, PsbJ, PsbK, PsbL, PsbM, PsbT, PsbY, PsbZ, Psb30/Ycf12, at least 3 peripheral proteins of the oxygen-evolving complex and a large number of cofactors. It forms dimeric complexes.

Its subcellular location is the plastid. It is found in the chloroplast thylakoid membrane. Its function is as follows. One of the components of the core complex of photosystem II (PSII). PSII is a light-driven water:plastoquinone oxidoreductase that uses light energy to abstract electrons from H(2)O, generating O(2) and a proton gradient subsequently used for ATP formation. It consists of a core antenna complex that captures photons, and an electron transfer chain that converts photonic excitation into a charge separation. This subunit is found at the monomer-monomer interface and is required for correct PSII assembly and/or dimerization. The polypeptide is Photosystem II reaction center protein L (Cyanidium caldarium (Red alga)).